The chain runs to 440 residues: MEIVTVALIAIVFTTFLYLIVRESSPNGLPPGPKPWPIVGNLLQLGEKPHSQFAQLAETYGDLFTLKLGTQTVVVASTPLAASEVLKAHDRTLCGRYVFQSFRVKNHVENSIVWNECNETWKKLRKVCRTQLFTQKMIENQAEVREIKTMEMVKYLKKNEGIEVKIVEVIFGTLVNMFGNLIFSQDIFKLGDESSGSLEMKQHIWRMLELGNSANPGDYVPLLGSLDLFGQRKDVADCLQGVYGVWGAMLKERRIAKRQINGDTKNDFVDVLLDSGLDDQQINSLLLDMFSAGTETTASTIEWALTELTKNPQVTADIRSELLSVVGKRAVKESDILNLPYLQAFVKETLRLHPPTPLLIPRRALETCQVLNYTIPKECQIMVNAWGIGRDPKTWTDPLKFSPDRFLNSSIDFKGNDFELIPFGAGRRICPGVPPGNSVY.

The chain crosses the membrane as a helical; Signal-anchor for type II membrane protein span at residues 2-21; it reads EIVTVALIAIVFTTFLYLIV. Residue C430 coordinates heme.

Belongs to the cytochrome P450 family. It depends on heme as a cofactor.

The protein resides in the membrane. Involved in the biosynthesis of benzylisoquinoline alkaloids. Probably involved in papaverine biosynthesis since its transcripts are abundant only in cultivars with substantial papaverine accumulation. May catalyze the 3'-hydroxylation of (S)-coclaurine. This Papaver somniferum (Opium poppy) protein is (S)-N-methylcoclaurine 3'-hydroxylase-like protein.